Reading from the N-terminus, the 239-residue chain is Geranylgeranylglyceryl phosphate synthase (239 aa).

Lys13 serves as a coordination point for sn-glycerol 1-phosphate. The Mg(2+) site is built by Asp15 and Thr42. Sn-glycerol 1-phosphate contacts are provided by residues 162 to 167 (YIEYSG), Gly192, and 212 to 213 (GD).

It belongs to the GGGP/HepGP synthase family. Group I subfamily. The cofactor is Mg(2+).

It localises to the cytoplasm. It carries out the reaction sn-glycerol 1-phosphate + (2E,6E,10E)-geranylgeranyl diphosphate = sn-3-O-(geranylgeranyl)glycerol 1-phosphate + diphosphate. The protein operates within membrane lipid metabolism; glycerophospholipid metabolism. Its function is as follows. Prenyltransferase that catalyzes the transfer of the geranylgeranyl moiety of geranylgeranyl diphosphate (GGPP) to the C3 hydroxyl of sn-glycerol-1-phosphate (G1P). This reaction is the first ether-bond-formation step in the biosynthesis of archaeal membrane lipids. This chain is Geranylgeranylglyceryl phosphate synthase, found in Haloquadratum walsbyi (strain DSM 16790 / HBSQ001).